Here is a 125-residue protein sequence, read N- to C-terminus: S-adenosylmethionine decarboxylase proenzyme (125 aa).

Ser71 acts as the Schiff-base intermediate with substrate; via pyruvic acid in catalysis. Ser71 carries the post-translational modification Pyruvic acid (Ser); by autocatalysis. His76 functions as the Proton acceptor; for processing activity in the catalytic mechanism. Catalysis depends on Cys91, which acts as the Proton donor; for catalytic activity.

Belongs to the prokaryotic AdoMetDC family. Type 1 subfamily. As to quaternary structure, heterotetramer of two alpha and two beta chains arranged as a dimer of alpha/beta heterodimers. Requires pyruvate as cofactor. Post-translationally, is synthesized initially as an inactive proenzyme. Formation of the active enzyme involves a self-maturation process in which the active site pyruvoyl group is generated from an internal serine residue via an autocatalytic post-translational modification. Two non-identical subunits are generated from the proenzyme in this reaction, and the pyruvate is formed at the N-terminus of the alpha chain, which is derived from the carboxyl end of the proenzyme. The post-translation cleavage follows an unusual pathway, termed non-hydrolytic serinolysis, in which the side chain hydroxyl group of the serine supplies its oxygen atom to form the C-terminus of the beta chain, while the remainder of the serine residue undergoes an oxidative deamination to produce ammonia and the pyruvoyl group blocking the N-terminus of the alpha chain.

It catalyses the reaction S-adenosyl-L-methionine + H(+) = S-adenosyl 3-(methylsulfanyl)propylamine + CO2. It functions in the pathway amine and polyamine biosynthesis; S-adenosylmethioninamine biosynthesis; S-adenosylmethioninamine from S-adenosyl-L-methionine: step 1/1. Catalyzes the decarboxylation of S-adenosylmethionine to S-adenosylmethioninamine (dcAdoMet), the propylamine donor required for the synthesis of the polyamines spermine and spermidine from the diamine putrescine. In Pyrobaculum arsenaticum (strain DSM 13514 / JCM 11321 / PZ6), this protein is S-adenosylmethionine decarboxylase proenzyme.